Consider the following 156-residue polypeptide: ATP synthase subunit b (156 aa).

A helical membrane pass occupies residues 7–26 (FIGQMVAFAIFIYLTYRYVW).

The protein belongs to the ATPase B chain family. F-type ATPases have 2 components, F(1) - the catalytic core - and F(0) - the membrane proton channel. F(1) has five subunits: alpha(3), beta(3), gamma(1), delta(1), epsilon(1). F(0) has three main subunits: a(1), b(2) and c(10-14). The alpha and beta chains form an alternating ring which encloses part of the gamma chain. F(1) is attached to F(0) by a central stalk formed by the gamma and epsilon chains, while a peripheral stalk is formed by the delta and b chains.

The protein resides in the cell inner membrane. Functionally, f(1)F(0) ATP synthase produces ATP from ADP in the presence of a proton or sodium gradient. F-type ATPases consist of two structural domains, F(1) containing the extramembraneous catalytic core and F(0) containing the membrane proton channel, linked together by a central stalk and a peripheral stalk. During catalysis, ATP synthesis in the catalytic domain of F(1) is coupled via a rotary mechanism of the central stalk subunits to proton translocation. Its function is as follows. Component of the F(0) channel, it forms part of the peripheral stalk, linking F(1) to F(0). In Cellvibrio japonicus (strain Ueda107) (Pseudomonas fluorescens subsp. cellulosa), this protein is ATP synthase subunit b.